A 52-amino-acid chain; its full sequence is Alpha-crystallin B chain (52 aa).

It belongs to the small heat shock protein (HSP20) family. In terms of assembly, homodimer. Aggregates with homologous proteins, including alpha-A-crystallin and the small heat shock protein HSPB1, to form large heteromeric complexes.

Functionally, may contribute to the transparency and refractive index of the lens. The protein is Alpha-crystallin B chain (CRYAB) of Trachemys scripta elegans (Red-eared slider turtle).